The sequence spans 368 residues: Cyclin-dependent kinase 2 (368 aa).

Positions 45–330 (FCSLRRIGEG…AKGALSHRYF (286 aa)) constitute a Protein kinase domain. Residues 51 to 59 (IGEGTYGVV) and lysine 74 contribute to the ATP site. The Proton acceptor role is filled by aspartate 170. Residues asparagine 175 and aspartate 188 each coordinate Mg(2+).

It belongs to the protein kinase superfamily. CMGC Ser/Thr protein kinase family. CDC2/CDKX subfamily. In terms of assembly, interacts with cye-1; the interaction likely regulates cdk-2 activity and is probably required for gld-1 phosphorylation. It depends on Mg(2+) as a cofactor.

The enzyme catalyses L-seryl-[protein] + ATP = O-phospho-L-seryl-[protein] + ADP + H(+). It catalyses the reaction L-threonyl-[protein] + ATP = O-phospho-L-threonyl-[protein] + ADP + H(+). In terms of biological role, serine/threonine-protein kinase which, in association with cye-1, regulates proliferation, quiescent state and cell fate during the development of several cell lineages. In the embryo, initiates the establishment of cell polarity through the recruitment of the centrosomal proteins spd-2 and spd-5 during prophase. Phosphorylation and inhibition of the translational repressor gld-1 by the cdk-2/cye-1 complex regulates the pool of germline stem cells and the size of the mitotic zone in the gonads by preventing entry into meiosis. The protein is Cyclin-dependent kinase 2 of Caenorhabditis elegans.